Here is a 165-residue protein sequence, read N- to C-terminus: Phosphopantetheine adenylyltransferase (165 aa).

Substrate is bound at residue Thr11. ATP-binding positions include 11-12 and His19; that span reads TF. Substrate-binding residues include Lys43, Thr79, and Arg93. Residues Glu104 and 128 to 134 contribute to the ATP site; that span reads LEPLNST.

It belongs to the bacterial CoaD family. As to quaternary structure, homohexamer. It depends on Mg(2+) as a cofactor.

It is found in the cytoplasm. The catalysed reaction is (R)-4'-phosphopantetheine + ATP + H(+) = 3'-dephospho-CoA + diphosphate. The protein operates within cofactor biosynthesis; coenzyme A biosynthesis; CoA from (R)-pantothenate: step 4/5. Its function is as follows. Reversibly transfers an adenylyl group from ATP to 4'-phosphopantetheine, yielding dephospho-CoA (dPCoA) and pyrophosphate. The polypeptide is Phosphopantetheine adenylyltransferase (Lactococcus lactis subsp. lactis (strain IL1403) (Streptococcus lactis)).